The primary structure comprises 112 residues: Large ribosomal subunit protein uL22 (112 aa).

The protein belongs to the universal ribosomal protein uL22 family. In terms of assembly, part of the 50S ribosomal subunit.

Functionally, this protein binds specifically to 23S rRNA; its binding is stimulated by other ribosomal proteins, e.g. L4, L17, and L20. It is important during the early stages of 50S assembly. It makes multiple contacts with different domains of the 23S rRNA in the assembled 50S subunit and ribosome. Its function is as follows. The globular domain of the protein is located near the polypeptide exit tunnel on the outside of the subunit, while an extended beta-hairpin is found that lines the wall of the exit tunnel in the center of the 70S ribosome. This Sorangium cellulosum (strain So ce56) (Polyangium cellulosum (strain So ce56)) protein is Large ribosomal subunit protein uL22.